A 369-amino-acid polypeptide reads, in one-letter code: Probable peptidoglycan glycosyltransferase FtsW (369 aa).

The next 8 helical transmembrane spans lie at 11–31 (LLSVTIILLIFSIIMVGSSSV), 48–68 (NFIHSIISILCMIFVFNVPIY), 77–97 (LILCSIILLLTLNYFGISNHG), 134–151 (TSTIQLISIILIVSKLLL), 154–174 (PDFGTLVILYSSLLFMLFLIG), 177–197 (FLFLSASSAIFTTIVLSLIYF), 265–285 (LGYLGIAMIVISLFFIFFQGM), and 306–326 (ISLLIIIQSIINIGSSIGILP).

Belongs to the SEDS family. FtsW subfamily.

It is found in the cell inner membrane. The enzyme catalyses [GlcNAc-(1-&gt;4)-Mur2Ac(oyl-L-Ala-gamma-D-Glu-L-Lys-D-Ala-D-Ala)](n)-di-trans,octa-cis-undecaprenyl diphosphate + beta-D-GlcNAc-(1-&gt;4)-Mur2Ac(oyl-L-Ala-gamma-D-Glu-L-Lys-D-Ala-D-Ala)-di-trans,octa-cis-undecaprenyl diphosphate = [GlcNAc-(1-&gt;4)-Mur2Ac(oyl-L-Ala-gamma-D-Glu-L-Lys-D-Ala-D-Ala)](n+1)-di-trans,octa-cis-undecaprenyl diphosphate + di-trans,octa-cis-undecaprenyl diphosphate + H(+). Its pathway is cell wall biogenesis; peptidoglycan biosynthesis. Functionally, peptidoglycan polymerase that is essential for cell division. The polypeptide is Probable peptidoglycan glycosyltransferase FtsW (Riesia pediculicola (strain USDA)).